The primary structure comprises 320 residues: Small ribosomal subunit protein uS15m (320 aa).

2 disordered regions span residues 37-60 (NISQKEKKRKMKQDPYGWAQAQQR) and 214-242 (QSLERPTPPLARGVEPKPQPVRAGPDTGS).

It belongs to the universal ribosomal protein uS15 family. Component of the mitochondrial small ribosomal subunit (mt-SSU). Mature N.crassa 74S mitochondrial ribosomes consist of a small (37S) and a large (54S) subunit. The 37S small subunit contains a 16S ribosomal RNA (16S mt-rRNA) and 32 different proteins. The 54S large subunit contains a 23S rRNA (23S mt-rRNA) and 42 different proteins.

It is found in the mitochondrion. Component of the mitochondrial ribosome (mitoribosome), a dedicated translation machinery responsible for the synthesis of mitochondrial genome-encoded proteins, including at least some of the essential transmembrane subunits of the mitochondrial respiratory chain. The mitoribosomes are attached to the mitochondrial inner membrane and translation products are cotranslationally integrated into the membrane. In Neurospora crassa (strain ATCC 24698 / 74-OR23-1A / CBS 708.71 / DSM 1257 / FGSC 987), this protein is Small ribosomal subunit protein uS15m (mrps28).